The chain runs to 476 residues: MGIKFLEVIKPFCAVLPEIQKPERKIQFREKVLWTAITLFIFLVCCQIPLFGIMSSDSADPFYWMRVILASNRGTLMELGISPIVTSGLIMQLLAGAKIIEVGDTPKDRALFNGAQKLFGMIITIGQSIVYVMTGMYGDPSEMGAGICLLIIIQLFVAGLIVLLLDELLQKGYGLGSGISLFIATNICETIVWKAFSPTTVNTGRGTEFEGAIIALFHLLATRTDKVRALREAFYRQNLPNLLNLIATVFVFAVVIYFQGFRVDLPIKSARYRGQYNTYPIKLFYTSNIPIILQSALVSNLYVISQMLSTRFSGNFLVNLLGTWSDTSTGGPARAYPVGGLCYFLSPPESFGSVLDDPIHAAIYIVFMLGSCAFFSKTWIEVSGSSAKDVAKQLKEQQMVMGGHRETSMVHELNRYIPTAAAFGGLCIGGLSVMADFLGAIGSGTGILLAVTIIYQYFEIFVKEQSEMGSMGALLF.

The Cytoplasmic segment spans residues 2–33 (GIKFLEVIKPFCAVLPEIQKPERKIQFREKVL). The chain crosses the membrane as a helical span at residues 34–53 (WTAITLFIFLVCCQIPLFGI). Residues 54–76 (MSSDSADPFYWMRVILASNRGTL) lie on the Lumenal side of the membrane. The chain crosses the membrane as a helical span at residues 77–96 (MELGISPIVTSGLIMQLLAG). At 97-117 (AKIIEVGDTPKDRALFNGAQK) the chain is on the cytoplasmic side. Residues 118-138 (LFGMIITIGQSIVYVMTGMYG) form a helical membrane-spanning segment. At 139–144 (DPSEMG) the chain is on the lumenal side. Residues 145-165 (AGICLLIIIQLFVAGLIVLLL) form a helical membrane-spanning segment. The Cytoplasmic portion of the chain corresponds to 166 to 172 (DELLQKG). A helical transmembrane segment spans residues 173 to 193 (YGLGSGISLFIATNICETIVW). At 194–240 (KAFSPTTVNTGRGTEFEGAIIALFHLLATRTDKVRALREAFYRQNLP) the chain is on the lumenal side. Residues 241–261 (NLLNLIATVFVFAVVIYFQGF) traverse the membrane as a helical segment. The Cytoplasmic segment spans residues 262–288 (RVDLPIKSARYRGQYNTYPIKLFYTSN). Residues 289–309 (IPIILQSALVSNLYVISQMLS) form a helical membrane-spanning segment. Over 310–354 (TRFSGNFLVNLLGTWSDTSTGGPARAYPVGGLCYFLSPPESFGSV) the chain is Lumenal. The helical transmembrane segment at 355 to 375 (LDDPIHAAIYIVFMLGSCAFF) threads the bilayer. The Cytoplasmic portion of the chain corresponds to 376 to 420 (SKTWIEVSGSSAKDVAKQLKEQQMVMGGHRETSMVHELNRYIPTA). A helical transmembrane segment spans residues 421–441 (AAFGGLCIGGLSVMADFLGAI). Over 442–445 (GSGT) the chain is Lumenal. The chain crosses the membrane as a helical span at residues 446–462 (GILLAVTIIYQYFEIFV). The Cytoplasmic portion of the chain corresponds to 463 to 476 (KEQSEMGSMGALLF).

Belongs to the SecY/SEC61-alpha family. The SEC61 channel-forming translocon complex consists of channel-forming core components SEC61A1, SEC61B and SEC61G and different auxiliary components such as SEC62 and SEC63. The SEC61 channel associates with the multi-pass translocon (MPT) complex.

Its subcellular location is the endoplasmic reticulum membrane. In terms of biological role, component of SEC61 channel-forming translocon complex that mediates transport of signal peptide-containing precursor polypeptides across the endoplasmic reticulum (ER). Forms a ribosome receptor and a gated pore in the ER membrane, both functions required for cotranslational translocation of nascent polypeptides. May cooperate with auxiliary protein SEC62, SEC63 and HSPA5/BiP to enable post-translational transport of small presecretory proteins. The SEC61 channel is also involved in ER membrane insertion of transmembrane proteins: it mediates membrane insertion of the first few transmembrane segments of proteins, while insertion of subsequent transmembrane regions of multi-pass membrane proteins is mediated by the multi-pass translocon (MPT) complex. In Oncorhynchus mykiss (Rainbow trout), this protein is Protein transport protein Sec61 subunit alpha isoform A (sec61aa).